The chain runs to 479 residues: Sulfate adenylyltransferase subunit 1 (479 aa).

Residues 25-239 form the tr-type G domain; sequence KSLLRFLTCG…EVLETVDIQR (215 aa). Residues 34–41 are G1; it reads GSVDDGKS. Residue 34 to 41 coordinates GTP; that stretch reads GSVDDGKS. A G2 region spans residues 92–96; it reads GITID. Positions 113 to 116 are G3; the sequence is DTPG. Residues 113–117 and 168–171 contribute to the GTP site; these read DTPGH and NKMD. The G4 stretch occupies residues 168-171; sequence NKMD. The tract at residues 206–208 is G5; the sequence is SAL.

It belongs to the TRAFAC class translation factor GTPase superfamily. Classic translation factor GTPase family. CysN/NodQ subfamily. As to quaternary structure, heterodimer composed of CysD, the smaller subunit, and CysN.

It catalyses the reaction sulfate + ATP + H(+) = adenosine 5'-phosphosulfate + diphosphate. It functions in the pathway sulfur metabolism; hydrogen sulfide biosynthesis; sulfite from sulfate: step 1/3. With CysD forms the ATP sulfurylase (ATPS) that catalyzes the adenylation of sulfate producing adenosine 5'-phosphosulfate (APS) and diphosphate, the first enzymatic step in sulfur assimilation pathway. APS synthesis involves the formation of a high-energy phosphoric-sulfuric acid anhydride bond driven by GTP hydrolysis by CysN coupled to ATP hydrolysis by CysD. This Salmonella dublin (strain CT_02021853) protein is Sulfate adenylyltransferase subunit 1.